We begin with the raw amino-acid sequence, 479 residues long: Proline--tRNA ligase 2 (479 aa).

This sequence belongs to the class-II aminoacyl-tRNA synthetase family. ProS type 3 subfamily. As to quaternary structure, homodimer.

It localises to the cytoplasm. The enzyme catalyses tRNA(Pro) + L-proline + ATP = L-prolyl-tRNA(Pro) + AMP + diphosphate. Functionally, catalyzes the attachment of proline to tRNA(Pro) in a two-step reaction: proline is first activated by ATP to form Pro-AMP and then transferred to the acceptor end of tRNA(Pro). The sequence is that of Proline--tRNA ligase 2 from Rhodococcus jostii (strain RHA1).